We begin with the raw amino-acid sequence, 371 residues long: Putative glutamate--cysteine ligase 2 (371 aa).

The protein belongs to the glutamate--cysteine ligase type 2 family. YbdK subfamily. As to quaternary structure, homodimer.

The enzyme catalyses L-cysteine + L-glutamate + ATP = gamma-L-glutamyl-L-cysteine + ADP + phosphate + H(+). Functionally, ATP-dependent carboxylate-amine ligase which exhibits weak glutamate--cysteine ligase activity. In Klebsiella pneumoniae (strain 342), this protein is Putative glutamate--cysteine ligase 2.